Reading from the N-terminus, the 61-residue chain is Short neurotoxin 4 (61 aa).

Cystine bridges form between cysteine 3–cysteine 23, cysteine 17–cysteine 40, cysteine 42–cysteine 53, and cysteine 54–cysteine 59.

The protein belongs to the three-finger toxin family. Short-chain subfamily. Type I alpha-neurotoxin sub-subfamily. Expressed by the venom gland.

Its subcellular location is the secreted. Its function is as follows. Binds to muscle nicotinic acetylcholine receptor (nAChR) and inhibit acetylcholine from binding to the receptor, thereby impairing neuromuscular transmission. The protein is Short neurotoxin 4 of Naja annulifera (Banded Egyptian cobra).